A 491-amino-acid polypeptide reads, in one-letter code: Ketol-acid reductoisomerase (NADP(+)) (491 aa).

Residues 15–208 (AQLGKCRFMG…GGHRAGVLES (194 aa)) form the KARI N-terminal Rossmann domain. NADP(+)-binding positions include 45–48 (CGAQ), arginine 68, arginine 76, serine 78, and 108–110 (DKQ). Histidine 132 is an active-site residue. Glycine 158 is a binding site for NADP(+). KARI C-terminal knotted domains are found at residues 209–344 (SFVA…TAPQ) and 345–484 (YEGK…MTDM). Aspartate 217, glutamate 221, glutamate 389, and glutamate 393 together coordinate Mg(2+). A substrate-binding site is contributed by serine 414.

It belongs to the ketol-acid reductoisomerase family. Requires Mg(2+) as cofactor.

It catalyses the reaction (2R)-2,3-dihydroxy-3-methylbutanoate + NADP(+) = (2S)-2-acetolactate + NADPH + H(+). The catalysed reaction is (2R,3R)-2,3-dihydroxy-3-methylpentanoate + NADP(+) = (S)-2-ethyl-2-hydroxy-3-oxobutanoate + NADPH + H(+). Its pathway is amino-acid biosynthesis; L-isoleucine biosynthesis; L-isoleucine from 2-oxobutanoate: step 2/4. It functions in the pathway amino-acid biosynthesis; L-valine biosynthesis; L-valine from pyruvate: step 2/4. Its function is as follows. Involved in the biosynthesis of branched-chain amino acids (BCAA). Catalyzes an alkyl-migration followed by a ketol-acid reduction of (S)-2-acetolactate (S2AL) to yield (R)-2,3-dihydroxy-isovalerate. In the isomerase reaction, S2AL is rearranged via a Mg-dependent methyl migration to produce 3-hydroxy-3-methyl-2-ketobutyrate (HMKB). In the reductase reaction, this 2-ketoacid undergoes a metal-dependent reduction by NADPH to yield (R)-2,3-dihydroxy-isovalerate. The polypeptide is Ketol-acid reductoisomerase (NADP(+)) (Escherichia coli (strain ATCC 8739 / DSM 1576 / NBRC 3972 / NCIMB 8545 / WDCM 00012 / Crooks)).